Reading from the N-terminus, the 382-residue chain is uncharacterized protein (382 aa).

12 consecutive transmembrane segments (helical) span residues 8-28, 45-65, 75-95, 102-122, 131-151, 157-177, 204-224, 231-251, 270-290, 291-311, 325-345, and 349-369; these read VMLLLCGLLLLTLAIAVLNTL, MVSSSYFTGNLVGTLFTGYLI, YLASLIFAAGCVGLGVMVGFW, FIAGIGCAMIWVVVESALMCS, LLAAYMMAYYMGTFLGQLLVS, LLHVLPWVTGMILAGILPLLF, LGVNGCIISGIVLGSLYGLMP, GMANASIGFWMAVLVSAGILG, VQVFVVILGSIAMLTQAAMAP, ALFILGAAGFTLYPVAMAWAC, ALLLSYTVGSLLGPSFAAMLM, and SDNLLFIMIASVSFIYLLMLL.

This sequence belongs to the major facilitator superfamily. YcaD (TC 2.A.1.26) family.

The protein resides in the cell inner membrane. This is an uncharacterized protein from Salmonella enteritidis PT4 (strain P125109).